Reading from the N-terminus, the 151-residue chain is D-aminoacyl-tRNA deacylase (151 aa).

The short motif at 142–143 (GP) is the Gly-cisPro motif, important for rejection of L-amino acids element.

The protein belongs to the DTD family. Homodimer.

It is found in the cytoplasm. The catalysed reaction is glycyl-tRNA(Ala) + H2O = tRNA(Ala) + glycine + H(+). It carries out the reaction a D-aminoacyl-tRNA + H2O = a tRNA + a D-alpha-amino acid + H(+). Functionally, an aminoacyl-tRNA editing enzyme that deacylates mischarged D-aminoacyl-tRNAs. Also deacylates mischarged glycyl-tRNA(Ala), protecting cells against glycine mischarging by AlaRS. Acts via tRNA-based rather than protein-based catalysis; rejects L-amino acids rather than detecting D-amino acids in the active site. By recycling D-aminoacyl-tRNA to D-amino acids and free tRNA molecules, this enzyme counteracts the toxicity associated with the formation of D-aminoacyl-tRNA entities in vivo and helps enforce protein L-homochirality. This is D-aminoacyl-tRNA deacylase from Psychrobacter arcticus (strain DSM 17307 / VKM B-2377 / 273-4).